The primary structure comprises 485 residues: Glycogen synthase (485 aa).

Lysine 20 contacts ADP-alpha-D-glucose.

It belongs to the glycosyltransferase 1 family. Bacterial/plant glycogen synthase subfamily.

The catalysed reaction is [(1-&gt;4)-alpha-D-glucosyl](n) + ADP-alpha-D-glucose = [(1-&gt;4)-alpha-D-glucosyl](n+1) + ADP + H(+). Its pathway is glycan biosynthesis; glycogen biosynthesis. Functionally, synthesizes alpha-1,4-glucan chains using ADP-glucose. The chain is Glycogen synthase from Vibrio parahaemolyticus serotype O3:K6 (strain RIMD 2210633).